A 1726-amino-acid polypeptide reads, in one-letter code: Merozoite surface protein 1 (1726 aa).

The first 19 residues, 1 to 19 (MKIIFFLCSFLFFIINTQC), serve as a signal peptide directing secretion. The span at 61–124 (KGASAQSGTS…SGTSGTSPSS (64 aa)) shows a compositional bias: low complexity. The tract at residues 61-149 (KGASAQSGTS…PPADASDSDA (89 aa)) is disordered. Residues 125–134 (RSNTLPRSNT) are compositionally biased toward polar residues. N-linked (GlcNAc...) asparagine glycosylation occurs at N133. Low complexity predominate over residues 135-144 (SSGASPPADA). 4 N-linked (GlcNAc...) asparagine glycosylation sites follow: N272, N501, N567, and N638. The disordered stretch occupies residues 735-771 (SETTEDGGHSTHTLSQSGETEVTEETEETEETVGHTT). The span at 755–765 (EVTEETEETEE) shows a compositional bias: acidic residues. N-linked (GlcNAc...) asparagine glycosylation is found at N827, N924, N944, N990, N1016, N1114, and N1221. A compositionally biased stretch (low complexity) spans 914–952 (TGTSSTSSPGNTTVNTAQSATHSNSQNQQSNASSTNTQN). The segment at 914–961 (TGTSSTSSPGNTTVNTAQSATHSNSQNQQSNASSTNTQNGVAVSSGPA) is disordered. Disordered regions lie at residues 1254 to 1284 (VTPP…TQIP) and 1476 to 1497 (KEKF…DEQK). Residues 1270–1284 (VSGSSGSTKEETQIP) are compositionally biased toward polar residues. A compositionally biased stretch (pro residues) spans 1481 to 1490 (SSPPTTPPSP). An N-linked (GlcNAc...) asparagine glycan is attached at N1613. EGF-like domains follow at residues 1617–1657 (HQCV…VENP) and 1658–1705 (NPTC…IFCS). Intrachain disulfides connect C1619–C1630, C1624–C1640, C1642–C1653, C1661–C1674, C1668–C1688, and C1690–C1704. S1705 carries GPI-anchor amidated serine lipidation. Residues 1706 to 1726 (SSNFLGISFLLILMLILYSFI) constitute a propeptide, removed in mature form.

As to quaternary structure, forms a complex composed of subunits p83, p30, p38, and p42 which remain non-covalently associated; the complex is formed at the merozoite surface prior to egress from host erythrocytes. Forms a complex composed of processed MSP1 subunits, MSP6 subunit p36 and MSP7; the complex is formed at the merozoite surface prior to egress from host erythrocytes. Within the complex, interacts (via subunit p38) with MSP6 subunit p36 and (via subunits p83, p30 and p38) with MSP7 (via subunit p22). Forms a complex composed of MSP1, MSP6, DBLMSP1 and DBLMSP2. Within the complex, interacts (via subunit p38) with DBLMSP1 and DBLMSP2. Forms a complex composed of MSP1, and rhoptry proteins RhopH3, RAP1 and CLAG9/RhopH3. Within the complex, interacts (via subunits p42 and p19) with RhopH3 (via C-terminus). Forms a complex composed of MSP1, MSP6, MSP7, MSP9 and MSP3; within the complex, MSP6 and MSP9 mediate the binding to the host erythrocyte. Interacts (via subunits p19 and p42) with MSP9; the interaction is direct; MSP1 subunits p19 or p42, and MSP9 form a co-ligand complex that interacts with host SLC4A1/Band 3 protein. May interact with PFD6. Interacts with host spectrin. Interacts with host glycophorin GYPA in a sialic acid-independent manner. In terms of assembly, interacts with host proinflammatory cytokine S100P; the interaction blocks S100P inflammatory and chemotactic activities. As to quaternary structure, interacts with host SLC4A1/Band 3 (via 5ABC region) on the host erythrocyte surface in a sialic acid-independent manner. Post-translationally, the p190 precursor is cleaved by SUB1 prior to merozoite egress into 4 subunits p83, p30, p38, and p42 which remain non-covalently associated. SUB1-mediated proteolytic cleavage occurs in an orderly manner; the first cleavage occurs at the p30/p38 site, followed by cleavage at the p83/p30 site, the last cleavage occurs at the p38/p42 site. The order of cleavage is essential for parasite viability. SUB1-mediated processing is essential for merozoite egress. In a second processing step during erythrocyte invasion, p42 is cleaved by SUB2 into p33 and p19; the latter remains attached to the merozoite surface via its GPI-anchor and is endocytosed during the subsequent ring stage.

It is found in the cell membrane. Its subcellular location is the secreted. The protein localises to the vacuole membrane. Functionally, during the asexual blood stage, involved in merozoite egress from host erythrocytes possibly via its interaction with the host cytoskeleton protein spectrin resulting in the destabilization of the host cytoskeleton and thus leading to erythrocyte cell membrane rupture. Involved in the binding to host erythrocytes and is required for host erythrocyte invasion. In terms of biological role, by binding to host proinflammatory cytokine S100P may interfere with host immune responses. Involved in merozoite invasion of host erythrocytes. May play a role in the biogenesis and/or function of the food vacuole during the intraerythrocytic development. This is Merozoite surface protein 1 from Plasmodium falciparum (isolate Palo Alto / Uganda).